Reading from the N-terminus, the 310-residue chain is Beta-ketoacyl-[acyl-carrier-protein] synthase III (310 aa).

Catalysis depends on residues Cys116 and His239. The segment at 240–244 is ACP-binding; that stretch reads QANYR. Asn269 is an active-site residue.

Belongs to the thiolase-like superfamily. FabH family. Homodimer.

Its subcellular location is the cytoplasm. The enzyme catalyses malonyl-[ACP] + acetyl-CoA + H(+) = 3-oxobutanoyl-[ACP] + CO2 + CoA. It functions in the pathway lipid metabolism; fatty acid biosynthesis. Catalyzes the condensation reaction of fatty acid synthesis by the addition to an acyl acceptor of two carbons from malonyl-ACP. Catalyzes the first condensation reaction which initiates fatty acid synthesis and may therefore play a role in governing the total rate of fatty acid production. Possesses both acetoacetyl-ACP synthase and acetyl transacylase activities. Its substrate specificity determines the biosynthesis of branched-chain and/or straight-chain of fatty acids. In Acholeplasma laidlawii (strain PG-8A), this protein is Beta-ketoacyl-[acyl-carrier-protein] synthase III.